Consider the following 477-residue polypeptide: Cytochrome P450 716A1 (477 aa).

The helical transmembrane segment at 2-22 (YMAIMIILFLSSILLSLLLLL) threads the bilayer. Residue Cys-424 coordinates heme.

Belongs to the cytochrome P450 family. The cofactor is heme.

Its subcellular location is the membrane. Possesses triterpene oxidizing activity. Catalyzes the C28 hydroxylation of alpha-amyrin, beta-amyrin, and lupeol, producing uvaol, erythrodiol, and betulin, respectively. Catalyzes the C28 carboxylation of alpha- and beta-amyrin. The polypeptide is Cytochrome P450 716A1 (Arabidopsis thaliana (Mouse-ear cress)).